Here is a 147-residue protein sequence, read N- to C-terminus: Austinoid biosynthesis clusters protein H (147 aa).

This sequence belongs to the trt14 isomerase family. As to quaternary structure, homodimer.

It functions in the pathway secondary metabolite biosynthesis; terpenoid biosynthesis. In terms of biological role, part of the gene cluster B that mediates the biosynthesis of the fungal meroterpenoid acetoxydehydroaustin. The first step of the pathway is the synthesis of 3,5-dimethylorsellinic acid by the polyketide synthase ausA. 3,5-dimethylorsellinic acid is then prenylated by the polyprenyl transferase ausN. Further epoxidation by the FAD-dependent monooxygenase ausM and cyclization by the probable terpene cyclase ausL lead to the formation of protoaustinoid A. Protoaustinoid A is then oxidized to spiro-lactone preaustinoid A3 by the combined action of the FAD-binding monooxygenases ausB and ausC, and the dioxygenase ausE. Acid-catalyzed keto-rearrangement and ring contraction of the tetraketide portion of preaustinoid A3 by ausJ lead to the formation of preaustinoid A4. The aldo-keto reductase ausK, with the help of ausH, is involved in the next step by transforming preaustinoid A4 into isoaustinone which is in turn hydroxylated by the P450 monooxygenase ausI to form austinolide. The cytochrome P450 monooxygenase ausG then modifies austinolide to austinol. Austinol is further acetylated to austin by the O-acetyltransferase ausP, which spontaneously changes to dehydroaustin. The cytochrome P450 monooxygenase then converts dehydroaustin is into 7-dehydrodehydroaustin. The hydroxylation catalyzed by ausR permits the second O-acetyltransferase ausQ to add an additional acetyl group to the molecule, leading to the formation of acetoxydehydroaustin. Due to genetic rearrangements of the clusters and the subsequent loss of some enzymes, the end product of the Penicillium brasilianum austinoid biosynthesis clusters is acetoxydehydroaustin. This chain is Austinoid biosynthesis clusters protein H, found in Penicillium brasilianum.